The following is a 92-amino-acid chain: MKPIRVKVKVNGRVQGVGFRHFTYKTAISLELTGWVRNLEDGCVEAVAEGPRQQVEEWLAALKKGPPASKVAGLTIQREIVEGVFERFEVRF.

Positions R5–F92 constitute an Acylphosphatase-like domain. Catalysis depends on residues R20 and N38.

Belongs to the acylphosphatase family.

It catalyses the reaction an acyl phosphate + H2O = a carboxylate + phosphate + H(+). In Syntrophotalea carbinolica (strain DSM 2380 / NBRC 103641 / GraBd1) (Pelobacter carbinolicus), this protein is Acylphosphatase (acyP).